Reading from the N-terminus, the 510-residue chain is DNA nucleotidylexotransferase (510 aa).

A Nuclear localization signal motif is present at residues 11-17 (PRRKQPK). Residues 27-124 (KYDIKFKDIA…QPVEIERKHR (98 aa)) form the BRCT domain. Residues 254 to 258 (VGLRT) are involved in DNA binding. A 2'-deoxyribonucleoside 5'-triphosphate contacts are provided by residues 329-334 (GFRRGN) and 338-341 (HDVD). Mg(2+) contacts are provided by aspartate 339, aspartate 341, and aspartate 434. A 2'-deoxyribonucleoside 5'-triphosphate is bound at residue 449–450 (GW).

The protein belongs to the DNA polymerase type-X family. Requires Mg(2+) as cofactor.

It is found in the nucleus. The catalysed reaction is DNA(n) + a 2'-deoxyribonucleoside 5'-triphosphate = DNA(n+1) + diphosphate. Functionally, template-independent DNA polymerase which catalyzes the random addition of deoxynucleoside 5'-triphosphate to the 3'-end of a DNA initiator. One of the in vivo functions of this enzyme is the addition of nucleotides at the junction (N region) of rearranged Ig heavy chain and T-cell receptor gene segments during the maturation of B- and T-cells. This chain is DNA nucleotidylexotransferase (DNTT), found in Ambystoma mexicanum (Axolotl).